Consider the following 619-residue polypeptide: Chitinase C (619 aa).

Residues 1-30 form the signal peptide; sequence MRFRHKAAALAATLALPLAGLVGLASPAQA. Positions 31–134 constitute a CBM2 domain; sequence ATSATATFAK…KLNGGSCDGT (104 aa). The Fibronectin type-III domain maps to 144-229; the sequence is APGTPTASNI…GAVKVTTTGG (86 aa). Positions 212-236 are disordered; it reads ADQTGPASGAVKVTTTGGGDGGNPG. Residues 227 to 236 are compositionally biased toward gly residues; that stretch reads TGGGDGGNPG. One can recognise a GH18 domain in the interval 240 to 619; the sequence is EVKMGYFTNW…TPAVRTTRRH (380 aa). Residues 312–313 and 339–342 each bind chitin; these read DQ and GGWT. The active-site Proton donor is the E382. Chitin-binding positions include Y383, 449–452, and W589; that span reads MTYD.

It belongs to the glycosyl hydrolase 18 family. Chitinase class II subfamily.

The catalysed reaction is Random endo-hydrolysis of N-acetyl-beta-D-glucosaminide (1-&gt;4)-beta-linkages in chitin and chitodextrins.. This Streptomyces lividans protein is Chitinase C (chiC).